The following is a 425-amino-acid chain: Glutamyl-tRNA reductase (425 aa).

Residues 49 to 52 (TCNR), Ser-107, 112 to 114 (EPQ), and Gln-118 each bind substrate. Cys-50 (nucleophile) is an active-site residue. 187 to 192 (GAGETI) lines the NADP(+) pocket.

Belongs to the glutamyl-tRNA reductase family. As to quaternary structure, homodimer.

It carries out the reaction (S)-4-amino-5-oxopentanoate + tRNA(Glu) + NADP(+) = L-glutamyl-tRNA(Glu) + NADPH + H(+). The protein operates within porphyrin-containing compound metabolism; protoporphyrin-IX biosynthesis; 5-aminolevulinate from L-glutamyl-tRNA(Glu): step 1/2. Functionally, catalyzes the NADPH-dependent reduction of glutamyl-tRNA(Glu) to glutamate 1-semialdehyde (GSA). This Pseudomonas entomophila (strain L48) protein is Glutamyl-tRNA reductase.